Consider the following 129-residue polypeptide: Small ribosomal subunit protein uS9 (129 aa).

A disordered region spans residues 107-129 (SRTVERKKYGRRKARRSPQFSKR). Residues 114-129 (KYGRRKARRSPQFSKR) are compositionally biased toward basic residues.

The protein belongs to the universal ribosomal protein uS9 family.

The chain is Small ribosomal subunit protein uS9 from Campylobacter jejuni subsp. jejuni serotype O:23/36 (strain 81-176).